A 282-amino-acid polypeptide reads, in one-letter code: Reaction center protein L chain (282 aa).

The Cytoplasmic segment spans residues alanine 2–valine 32. Residues glycine 33–leucine 56 form a helical membrane-spanning segment. The Periplasmic segment spans residues glutamine 57–lysine 83. Residues glycine 84 to leucine 112 form a helical membrane-spanning segment. The Cytoplasmic portion of the chain corresponds to glycine 113–tyrosine 116. A helical membrane pass occupies residues histidine 117–methionine 139. The Periplasmic portion of the chain corresponds to methionine 140–asparagine 171. (7R,8Z)-bacteriochlorophyll b-binding residues include histidine 154 and histidine 174. The chain crosses the membrane as a helical span at residues proline 172 to alanine 199. Histidine 191 contacts Fe cation. Residues asparagine 200 to isoleucine 225 lie on the Cytoplasmic side of the membrane. A ubiquinone is bound at residue phenylalanine 217. Residues glycine 226–isoleucine 251 form a helical membrane-spanning segment. Residue histidine 231 coordinates Fe cation. The Periplasmic segment spans residues threonine 252–glycine 282.

Belongs to the reaction center PufL/M/PsbA/D family. As to quaternary structure, reaction center is composed of four bacteriochlorophylls, two bacteriopheophytins, two ubiquinones, one iron, and three highly hydrophobic polypeptide chains (designated L, M, and H).

It is found in the cellular chromatophore membrane. The reaction center is a membrane-bound complex that mediates the initial photochemical event in the electron transfer process of photosynthesis. This Cereibacter sphaeroides (strain ATCC 17023 / DSM 158 / JCM 6121 / CCUG 31486 / LMG 2827 / NBRC 12203 / NCIMB 8253 / ATH 2.4.1.) (Rhodobacter sphaeroides) protein is Reaction center protein L chain (pufL).